A 4981-amino-acid polypeptide reads, in one-letter code: Protocadherin Fat 4 (4981 aa).

Residues 1–38 (MDLAPDRATGRPWLPLHTLSVSQLLRVFWLLSLLPGQA) form the signal peptide. Residues 39 to 4504 (WVHGAEPRQV…PEEISLPLWA (4466 aa)) lie on the Extracellular side of the membrane. Cadherin domains follow at residues 43 to 135 (AEPR…APVF), 136 to 250 (PDPS…PPVF), 251 to 353 (GSSH…DPVV), 359 to 475 (PATS…PPVF), 476 to 582 (SQQV…KPVF), 584 to 689 (QPEG…SPVF), 690 to 793 (YPVQ…PPVF), 794 to 893 (SQVA…SPHF), 894 to 996 (LQAI…SPVF), 997 to 1100 (DQLS…RPLF), 1101 to 1210 (NSTN…APKF), 1211 to 1315 (LKDF…TPSF), 1316 to 1420 (PKST…PPSF), 1421 to 1529 (PPGD…VPMF), 1529 to 1629 (FISQ…GPVF), 1630 to 1740 (TQPK…PPVF), 1741 to 1841 (PTDM…TPKF), 1842 to 1944 (SRPV…PPIF), 1945 to 2051 (SLNS…PPTF), 2051 to 2154 (FLSP…NPIF), 2155 to 2259 (AQAL…VPVF), 2260 to 2364 (ELSP…VPTF), 2365 to 2466 (ASKA…PPRF), 2467 to 2567 (QHHP…FPKV), 2568 to 2669 (RAKE…APIF), 2670 to 2773 (KEDP…APRF), 2773 to 2872 (FSQI…APRF), 2873 to 2983 (SRTS…APQF), 2984 to 3089 (LKSK…TPEF), 3090 to 3194 (SQSH…SPVF), 3195 to 3298 (LSDD…VPRF), 3299 to 3404 (VSKL…PPIF), 3405 to 3510 (TLNI…GPML), and 3509 to 3620 (MLTV…VEIF). N-linked (GlcNAc...) asparagine glycosylation is found at asparagine 84 and asparagine 237. Residues asparagine 393, asparagine 416, asparagine 435, asparagine 483, asparagine 551, asparagine 615, asparagine 676, asparagine 721, asparagine 825, asparagine 880, asparagine 946, asparagine 1085, asparagine 1101, asparagine 1104, asparagine 1225, asparagine 1296, asparagine 1389, and asparagine 1514 are each glycosylated (N-linked (GlcNAc...) asparagine). Asparagine 1828, asparagine 1899, asparagine 1967, and asparagine 2119 each carry an N-linked (GlcNAc...) asparagine glycan. Residues asparagine 2387 and asparagine 2430 are each glycosylated (N-linked (GlcNAc...) asparagine). 7 N-linked (GlcNAc...) asparagine glycosylation sites follow: asparagine 2921, asparagine 2937, asparagine 3036, asparagine 3140, asparagine 3217, asparagine 3392, and asparagine 3477. Asparagine 3706 and asparagine 3758 each carry an N-linked (GlcNAc...) asparagine glycan. Residues 3802–3860 (DHDSCVHGPCQNGGSCLRRLAVSSVLKSRESLPVIIVANEPLQPFLCKCLPGYAGSWCE) enclose the EGF-like 1 domain. Intrachain disulfides connect cysteine 3806–cysteine 3817, cysteine 3811–cysteine 3848, cysteine 3850–cysteine 3859, cysteine 3866–cysteine 3877, cysteine 3871–cysteine 3886, cysteine 3888–cysteine 3897, cysteine 3904–cysteine 3915, cysteine 3909–cysteine 3924, cysteine 3926–cysteine 3935, cysteine 3942–cysteine 3953, cysteine 3947–cysteine 3962, and cysteine 3964–cysteine 3973. The 37-residue stretch at 3862-3898 (DIDECLPSPCHSGGTCHNLVGGFSCSCPDGFTGRACE) folds into the EGF-like 2; calcium-binding domain. The 37-residue stretch at 3900 to 3936 (DINECLQSPCKNGAICQNFPGSFNCVCKTGYTGKMCE) folds into the EGF-like 3; calcium-binding domain. Residues 3938 to 3974 (SVNYCECNPCFNGGSCQSGVDSYYCHCPFGVFGKHCE) enclose the EGF-like 4 domain. A Laminin G-like 1 domain is found at 3975 to 4159 (LNSYGFEELS…LAAQGILDQC (185 aa)). Residue asparagine 4017 is glycosylated (N-linked (GlcNAc...) asparagine). 4 disulfides stabilise this stretch: cysteine 4133-cysteine 4159, cysteine 4166-cysteine 4177, cysteine 4171-cysteine 4186, and cysteine 4188-cysteine 4197. The 37-residue stretch at 4162–4198 (LEGACTRSPCQHGGTCMDYWSWQQCHCKEGLTGKYCE) folds into the EGF-like 5 domain. Residues 4217-4398 (YHMSQNEKRE…KTDPSVKIGC (182 aa)) enclose the Laminin G-like 2 domain. Residues asparagine 4267 and asparagine 4312 are each glycosylated (N-linked (GlcNAc...) asparagine). Disulfide bonds link cysteine 4365/cysteine 4398, cysteine 4430/cysteine 4441, cysteine 4435/cysteine 4451, and cysteine 4453/cysteine 4462. One can recognise an EGF-like 6 domain in the interval 4426–4463 (PPGDCASHPCQNGGSCEPGLHSGFTCSCPDSHTGRTCE). A helical membrane pass occupies residues 4505-4525 (VPAIVGSCATVLALLVLSLIL). Over 4526-4981 (CNQCRGKKAK…PKDGEAEQYV (456 aa)) the chain is Cytoplasmic. 5 disordered regions span residues 4534–4584 (AKNP…PDII), 4680–4713 (QGLR…STFY), 4752–4856 (RSKS…MEYD), 4869–4911 (KLSQ…AAPG), and 4957–4981 (AAAN…EQYV). Residues 4680-4699 (QGLRTSSLSHSACPTPNPLS) are compositionally biased toward polar residues. Residues 4706-4795 (FSKSSTFYRN…GLSIEEVERL (90 aa)) form a necessary and sufficient for interaction with MPDZ region. The segment covering 4809-4821 (DHGRSSSEEDCRR) has biased composition (basic and acidic residues). A Phosphoserine modification is found at serine 4876. A compositionally biased stretch (basic and acidic residues) spans 4971–4981 (VPKDGEAEQYV).

As to quaternary structure, heterophilic interaction with DCHS1; this interaction affects their respective protein levels. Interacts (via cytoplasmic domain) with MPDZ. Forms a complex with PALS1 and MPDZ. As to expression, widely expressed. Expressed in fetal brain, infant brain, brain tumor and colorectal cancer.

The protein localises to the membrane. Its function is as follows. Cadherins are calcium-dependent cell adhesion proteins. FAT4 plays a role in the maintenance of planar cell polarity as well as in inhibition of YAP1-mediated neuroprogenitor cell proliferation and differentiation. This is Protocadherin Fat 4 (FAT4) from Homo sapiens (Human).